The sequence spans 726 residues: MARAAKSAVVLCMDVGLAMSHSNQGKESPFEQAKKVMMLFLQRQVFAESKDEIAVVLYGTDTTDNALAREDQYENISVHRHLMLPDFDLLEQIENVVEPGSVQADFLDALIVSMDLLQKETLGKKYTRLHIAVFSDLSSPFSVDQLEVIIANLKKAEITLQFFLPFSVDEEEFGGSSNNRGNAGSSDRGCGPGKGLSDQQKEGIEMVRKIMFSLDGEEGLSEVFTFRDSLERLSIFKKIERRPMPWPCQLTVGSSLSIRIVGYKSVTEEKVKKTWTHIDAKTHKKEDIKKETVYCLNNDEETEVEKDDTIQGFRYGSDIVPFSKVDQEQMKYKSEGKCFAVLGFTKSSMVLSNQFVGNQVIRMFAPSDDEAASVALSALIHALDEMDMVAIVRYVYDRRSNPQVGVAFPHIKDKYECLVYVQLPFMEDIRQYLFSSLKNNKKFTPTESQNSAIDSLIDSMSLIYDDGETKEDLFKTSKLPNPQFQRLFQCLQHKALNPESPLPPIDQHLLDMLETPVEVKEACMAPLATVKACFPLQEATKRKEVKTADEIFTKKTDEPDAKKLKEDDEGFSLLRLADGNVTSVGSVNPDQDFQALLRQKNTDFKHVSDQLIKRIYECLDVKQTQYYMKSILCIKTFREEAIKLSQVRLFNDFLQLLKQKVDGSALMEFWDIIVQEEISLITSSESKGSSVTPEEAKQFLAQKEEKVEEAAMMEDEGDVDDLLDMM.

The VWFA domain occupies 8-160 (AVVLCMDVGL…ANLKKAEITL (153 aa)). The segment at 137 to 164 (LSSPFSVDQLEVIIANLKKAEITLQFFL) is leucine-zipper. Positions 175 to 186 (GSSNNRGNAGSS) are enriched in low complexity. The disordered stretch occupies residues 175–198 (GSSNNRGNAGSSDRGCGPGKGLSD). The 197-residue stretch at 253–449 (GSSLSIRIVG…NKKFTPTESQ (197 aa)) folds into the Ku domain. The short motif at 714-722 (EDEGDVDDL) is the EEXXXDL motif element.

This sequence belongs to the ku80 family. As to quaternary structure, heterodimer composed of xrcc5/Ku80 and xrcc6/Ku70. Post-translationally, ubiquitinated via 'Lys-48'-linked polyubiquitination at DNA double strand break sites (DSBs), leading to its release from DSBs and subsequent proteasomal degradation. Polyubiquitination is not required for completion of NHEJ. As to expression, expressed at high levels in oocyte and testis.

The protein localises to the nucleus. Single-stranded DNA-dependent ATP-dependent helicase that plays a key role in DNA non-homologous end joining (NHEJ). The sequence is that of X-ray repair cross-complementing protein 5 from Xenopus laevis (African clawed frog).